Reading from the N-terminus, the 401-residue chain is All trans-polyprenyl-diphosphate synthase PDSS2 (401 aa).

Belongs to the FPP/GGPP synthase family. Heterotetramer composed of 2 PDSS1/DPS1 and 2 PDSS2/DLP1 subunits.

Its subcellular location is the mitochondrion. The catalysed reaction is 7 isopentenyl diphosphate + (2E,6E)-farnesyl diphosphate = all-trans-decaprenyl diphosphate + 7 diphosphate. The enzyme catalyses 6 isopentenyl diphosphate + (2E,6E)-farnesyl diphosphate = all-trans-nonaprenyl diphosphate + 6 diphosphate. It functions in the pathway cofactor biosynthesis; ubiquinone biosynthesis. Heterotetrameric enzyme that catalyzes the condensation of farnesyl diphosphate (FPP), which acts as a primer, and isopentenyl diphosphate (IPP) to produce prenyl diphosphates of varying chain lengths and participates in the determination of the side chain of ubiquinone. Supplies nona and decaprenyl diphosphate, the precursors for the side chain of the isoprenoid quinones ubiquinone-9 (Q9) and ubiquinone-10 (Q10) respectively. The enzyme adds isopentenyl diphosphate molecules sequentially to farnesyl diphosphate with trans stereochemistry. May play a role during cerebellar development. May regulate mitochondrial respiratory chain function. In Rattus norvegicus (Rat), this protein is All trans-polyprenyl-diphosphate synthase PDSS2.